The following is a 451-amino-acid chain: Nicotinamide phosphoribosyltransferase (451 aa).

Arg-209 is a binding site for diphosphate. Residue Asp-232 coordinates beta-nicotinamide D-ribonucleotide. Residues His-248 and Arg-309 each coordinate diphosphate. Residues 309–311 (RPD), 364–365 (GD), and Arg-403 contribute to the beta-nicotinamide D-ribonucleotide site.

It belongs to the NAPRTase family.

The catalysed reaction is beta-nicotinamide D-ribonucleotide + diphosphate = 5-phospho-alpha-D-ribose 1-diphosphate + nicotinamide + H(+). It participates in cofactor biosynthesis; NAD(+) biosynthesis; nicotinamide D-ribonucleotide from 5-phospho-alpha-D-ribose 1-diphosphate and nicotinamide: step 1/1. Catalyzes the condensation of nicotinamide with 5-phosphoribosyl-1-pyrophosphate to yield nicotinamide mononucleotide, an intermediate in the biosynthesis of NAD. This Mycoplasma pneumoniae (strain ATCC 29342 / M129 / Subtype 1) (Mycoplasmoides pneumoniae) protein is Nicotinamide phosphoribosyltransferase.